The following is a 153-amino-acid chain: Arginine repressor (153 aa).

It belongs to the ArgR family.

Its subcellular location is the cytoplasm. The protein operates within amino-acid biosynthesis; L-arginine biosynthesis [regulation]. Functionally, regulates arginine biosynthesis genes. The polypeptide is Arginine repressor (Clostridium tetani (strain Massachusetts / E88)).